Here is a 136-residue protein sequence, read N- to C-terminus: Large ribosomal subunit protein bL21 (136 aa).

Residues 107–136 are disordered; sequence RAAADRKTAPKRASAKAAADQTTAAQATAE. Low complexity predominate over residues 121–136; the sequence is AKAAADQTTAAQATAE.

It belongs to the bacterial ribosomal protein bL21 family. As to quaternary structure, part of the 50S ribosomal subunit. Contacts protein L20.

In terms of biological role, this protein binds to 23S rRNA in the presence of protein L20. The polypeptide is Large ribosomal subunit protein bL21 (Acidothermus cellulolyticus (strain ATCC 43068 / DSM 8971 / 11B)).